Here is a 454-residue protein sequence, read N- to C-terminus: Exopolyphosphatase PRUNE1 (454 aa).

Met1 is subject to N-acetylmethionine. Mn(2+) contacts are provided by Asp28, Asp30, Asp106, and Asp179. A DHH motif motif is present at residues 106–108; the sequence is DHH. The tract at residues 394 to 421 is essential for homodimerization; the sequence is SLIAGLSQDDEDPPLPPTPMNSLVDECP. The segment at 398–421 is disordered; sequence GLSQDDEDPPLPPTPMNSLVDECP. Ser400 carries the post-translational modification Phosphoserine. Residue Thr411 is modified to Phosphothreonine. Ser415 carries the phosphoserine modification.

Belongs to the PPase class C family. Prune subfamily. Homooligomer. Able to homodimerize via its C-terminal domain. Interacts with NME1. Interacts with GSK3; at focal adhesion complexes where paxillin and vinculin are colocalized. Interacts with alpha and beta tubulin. Mn(2+) serves as cofactor.

Its subcellular location is the cytoplasm. It localises to the nucleus. The protein resides in the cell junction. The protein localises to the focal adhesion. The enzyme catalyses diphosphate + H2O = 2 phosphate + H(+). Activated by magnesium ions and inhibited by manganese ions. Inhibited by dipyridamole, moderately sensitive to IBMX and inhibited by vinpocetine. Its function is as follows. Phosphodiesterase (PDE) that has higher activity toward cAMP than cGMP, as substrate. Plays a role in cell proliferation, migration and differentiation, and acts as a negative regulator of NME1. Plays a role in the regulation of neurogenesis. Involved in the regulation of microtubule polymerization. The protein is Exopolyphosphatase PRUNE1 (Prune1) of Rattus norvegicus (Rat).